The primary structure comprises 340 residues: GTPase Obg (340 aa).

The 158-residue stretch at Met1–Ile158 folds into the Obg domain. Residues Ser159–Lys325 enclose the OBG-type G domain. Residues Gly165–Ser172, Phe190–Glu194, Asp211–Gly214, Asn278–Asp281, and Ser306–Ile308 each bind GTP. The Mg(2+) site is built by Ser172 and Thr192.

It belongs to the TRAFAC class OBG-HflX-like GTPase superfamily. OBG GTPase family. In terms of assembly, monomer. The cofactor is Mg(2+).

Its subcellular location is the cytoplasm. In terms of biological role, an essential GTPase which binds GTP, GDP and possibly (p)ppGpp with moderate affinity, with high nucleotide exchange rates and a fairly low GTP hydrolysis rate. Plays a role in control of the cell cycle, stress response, ribosome biogenesis and in those bacteria that undergo differentiation, in morphogenesis control. The chain is GTPase Obg from Ehrlichia ruminantium (strain Gardel).